We begin with the raw amino-acid sequence, 508 residues long: Photosystem II CP47 reaction center protein (508 aa).

6 consecutive transmembrane segments (helical) span residues 21–36, 101–115, 140–156, 203–218, 237–252, and 457–472; these read AVHIMHTALVAGWAGS, IVFSGLCFLAAIWHW, GIHLFLSGVACFGFGTF, IAAGTLGILAGLFHLS, VLSSSIAAVFFAAFVV, and SFALLFFFGHIWHGAR.

Belongs to the PsbB/PsbC family. PsbB subfamily. As to quaternary structure, PSII is composed of 1 copy each of membrane proteins PsbA, PsbB, PsbC, PsbD, PsbE, PsbF, PsbH, PsbI, PsbJ, PsbK, PsbL, PsbM, PsbT, PsbX, PsbY, PsbZ, Psb30/Ycf12, at least 3 peripheral proteins of the oxygen-evolving complex and a large number of cofactors. It forms dimeric complexes. It depends on Binds multiple chlorophylls. PSII binds additional chlorophylls, carotenoids and specific lipids. as a cofactor.

It localises to the plastid. The protein localises to the chloroplast thylakoid membrane. Its function is as follows. One of the components of the core complex of photosystem II (PSII). It binds chlorophyll and helps catalyze the primary light-induced photochemical processes of PSII. PSII is a light-driven water:plastoquinone oxidoreductase, using light energy to abstract electrons from H(2)O, generating O(2) and a proton gradient subsequently used for ATP formation. This chain is Photosystem II CP47 reaction center protein, found in Citrus sinensis (Sweet orange).